The following is a 91-amino-acid chain: Bombyxin C-1 (91 aa).

The first 19 residues, 1 to 19 (MKLVMLLVVVSAMLVLGGA), serve as a signal peptide directing secretion. Glutamine 20 is subject to Pyrrolidone carboxylic acid. Cystine bridges form between cysteine 27/cysteine 76, cysteine 39/cysteine 89, and cysteine 75/cysteine 80. A propeptide spans 47-67 (SGSQYAGYGWPWLPPFSSSRG) (c peptide like).

The protein belongs to the insulin family. Heterodimer of a B chain and an A chain linked by two disulfide bonds.

It is found in the secreted. Its function is as follows. Brain peptide responsible for activation of prothoracic glands to produce ecdysone in insects. The polypeptide is Bombyxin C-1 (BBXC1) (Bombyx mori (Silk moth)).